A 92-amino-acid polypeptide reads, in one-letter code: Acylphosphatase (92 aa).

The Acylphosphatase-like domain occupies 5 to 92 (RWHLLVSGKV…QEFTDFRTTH (88 aa)). Catalysis depends on residues R20 and N38.

The protein belongs to the acylphosphatase family.

It carries out the reaction an acyl phosphate + H2O = a carboxylate + phosphate + H(+). The protein is Acylphosphatase (acyP) of Marinobacter nauticus (strain ATCC 700491 / DSM 11845 / VT8) (Marinobacter aquaeolei).